The primary structure comprises 1211 residues: A disintegrin and metalloproteinase with thrombospondin motifs 2 (1211 aa).

An N-terminal signal peptide occupies residues 1–29 (MDPPAGAARRLLCPALLLLLLLLPPPLLP). The propeptide occupies 30 to 253 (PPPPPANARL…GVLEEHANSS (224 aa)). 2 N-linked (GlcNAc...) asparagine glycosylation sites follow: N112 and N251. The region spanning 266 to 470 (YNIEVLLGVD…HSYDCLLDDP (205 aa)) is the Peptidase M12B domain. 10 disulfides stabilise this stretch: C343–C392, C386–C465, C425–C451, C492–C517, C503–C526, C512–C545, C539–C550, C573–C610, C577–C615, and C588–C600. Zn(2+) is bound at residue H408. E409 is a catalytic residue. Residues H412 and H418 each coordinate Zn(2+). One can recognise a Disintegrin domain in the interval 480–560 (QLPGLHYSMN…IWLTPDILKR (81 aa)). Positions 561 to 616 (DGSWGAWSPFGSCSRTCGTGVKFRTRQCDNPHPANGGRTCSGLAYDFQLCSRQDCP) constitute a TSP type-1 1 domain. Positions 691-693 (RGD) match the Cell attachment site motif. Residues 723 to 851 (KVVKGTFTRS…NVDDNNVLEE (129 aa)) are spacer. 3 consecutive TSP type-1 domains span residues 854–912 (VVYE…NPQE), 914–971 (SQPV…RACS), and 975–1029 (CPGR…GPCP). N-linked (GlcNAc...) asparagine glycans are attached at residues N949 and N993. Disulfide bonds link C987–C1023, C991–C1028, and C1002–C1012. N1031 is a glycosylation site (N-linked (GlcNAc...) asparagine). The PLAC domain maps to 1059 to 1097 (SKGHCQGDKSIFCRMEVLSRYCSIPGYNKLCCKSCNLYN). N1098, N1145, and N1150 each carry an N-linked (GlcNAc...) asparagine glycan. Residues 1170–1191 (LEDEVQPPNLIPRRPSPYEKTR) form a disordered region.

May belong to a multimeric complex. Binds specifically to collagen type XIV. Zn(2+) is required as a cofactor. The precursor is cleaved by a furin endopeptidase. In terms of processing, glycosylated. Can be O-fucosylated by POFUT2 on a serine or a threonine residue found within the consensus sequence C1-X(2)-(S/T)-C2-G of the TSP type-1 repeat domains where C1 and C2 are the first and second cysteine residue of the repeat, respectively. Fucosylated repeats can then be further glycosylated by the addition of a beta-1,3-glucose residue by the glucosyltransferase, B3GALTL. Fucosylation mediates the efficient secretion of ADAMTS family members. Can also be C-glycosylated with one or two mannose molecules on tryptophan residues within the consensus sequence W-X-X-W of the TPRs, and N-glycosylated. These other glycosylations can also facilitate secretion. As to expression, expressed at high level in skin, bone, tendon and aorta and at low levels in thymus and brain.

Its subcellular location is the secreted. It localises to the extracellular space. The protein resides in the extracellular matrix. It catalyses the reaction Cleaves the N-propeptide of collagen chain alpha1(I) at Pro-|-Gln and of alpha1(II) and alpha2(I) at Ala-|-Gln.. Cleaves the propeptides of type I and II collagen prior to fibril assembly. Does not act on type III collagen. Cleaves lysyl oxidase LOX at a site downstream of its propeptide cleavage site to produce a short LOX form with reduced collagen-binding activity. This is A disintegrin and metalloproteinase with thrombospondin motifs 2 (ADAMTS2) from Homo sapiens (Human).